Reading from the N-terminus, the 454-residue chain is MAAGAGAGGGGGEGDSNGGGTSPGGVSAAAPAIGPHHLGVAAAEEAMWQMTLGGGESMESTPYPERIGEPDCSYYMRTGLCRFGMTCKFNHPPNRKLAVAAARMNGEYPYRVGQPECQYYLKTGTCKFGATCKFHHPREKAALANRVQLNVLGYPMRPNEKECAYYLRTGQCKFASTCKFHHPQPSNTMVAVRNSMYSPGQSATSPGQHTYPGAVTNWTLSRSASFIASPRWPGHSGYAQVIVPQGLVQVPGWNPYAAQMGSSSPDDQQRTPVTTQYYGSRQSETGGMGDHGMYQSYQGGSVPVGVYTVQGENIFPERPDQPECQFYMKTGDCKFGAVCKFHHPKERLVPAPNCALNSLGLPLRPGEPVCTFYSRYGICKFGPNCKFDHPMGTLMYGSATSPRGDVSSMHYQLSPSPGHPGILLDGGSGRSHRVPQSDSQQIPSGDGNAEREAS.

Gly residues predominate over residues 1–23; the sequence is MAAGAGAGGGGGEGDSNGGGTSP. Positions 1–30 are disordered; the sequence is MAAGAGAGGGGGEGDSNGGGTSPGGVSAAA. 5 C3H1-type zinc fingers span residues 66–94, 111–139, 157–185, 318–346, and 364–392; these read RIGE…HPPN, RVGQ…HPRE, RPNE…HPQP, RPDQ…HPKE, and RPGE…HPMG. The segment at 405–454 is disordered; the sequence is DVSSMHYQLSPSPGHPGILLDGGSGRSHRVPQSDSQQIPSGDGNAEREAS. Positions 434-443 are enriched in polar residues; sequence VPQSDSQQIP.

In Oryza sativa subsp. japonica (Rice), this protein is Zinc finger CCCH domain-containing protein 66.